The sequence spans 307 residues: Yop proteins translocation protein Q (307 aa).

This sequence belongs to the FliN/MopA/SpaO family.

Component of the Yop secretion machinery. The sequence is that of Yop proteins translocation protein Q (yscQ) from Yersinia pestis.